The chain runs to 46 residues: Large ribosomal subunit protein bL36 (46 aa).

Belongs to the bacterial ribosomal protein bL36 family.

In Serratia proteamaculans (strain 568), this protein is Large ribosomal subunit protein bL36.